The primary structure comprises 209 residues: Ras-like protein (209 aa).

A GTP-binding site is contributed by glycine 15–serine 22. The short motif at tyrosine 37 to tyrosine 45 is the Effector region element. GTP-binding positions include aspartate 62–glutamine 66 and asparagine 121–aspartate 124. S-palmitoyl cysteine attachment occurs at residues cysteine 202 and cysteine 203. Cysteine 206 is subject to Cysteine methyl ester. The S-geranylgeranyl cysteine moiety is linked to residue cysteine 206. A propeptide spans isoleucine 207–methionine 209 (removed in mature form).

Belongs to the small GTPase superfamily. Ras family.

It is found in the cell membrane. It catalyses the reaction GTP + H2O = GDP + phosphate + H(+). With respect to regulation, alternates between an inactive form bound to GDP and an active form bound to GTP. Activated by a guanine nucleotide-exchange factor (GEF) and inactivated by a GTPase-activating protein (GAP). In Laccaria bicolor (Bicoloured deceiver), this protein is Ras-like protein.